A 920-amino-acid polypeptide reads, in one-letter code: METSSSGITNGRTRVFHPVAKDVNILFDELEAVNSPCKDDDSLLHPGNLTSTSDDASRLEAGGETVPEKNKLNGLYFRDGKCRIDYILVYRKSNPQMEKREVFERNIRAEGLQMEKESSLINSDIIFVKLHAPWEVLGRYAEQMNVRMPFRRKIYYLPRRYKFMSRIDKQISRFRRWLPKKPMRLDKETLPDLEENDCYTAPFSQQRIHHFIIHNKDTFFNNATRSRIVHHILQRIKYEEGKNKIGLNRLLTNGSYEAAFPLHEGSYRSKNSIRTHGAVNHRHLLYECWASWGVWYKYQPLDLVRRYFGEKIGLYFAWLGWYTGMLFPAAFIGLFVFLYGVITLDHCQVSKEVCQATDIIMCPVCDKYCPFMRLSDSCVYAKVTHLFDNGATVFFAVFMAVWATVFLEFWKRRRAVIAYDWDLIDWEEEEEEIRPQFEAKYSKKERMNPISGKPEPYQAFADKCSRLIVSASGIFFMICVVIAAVFGIVIYRVVTVSTFAAFKWALIRNNSQVATTGTAVCINFCIIMLLNVLYEKVALLLTNLEQPRTESEWENSFTLKMFLFQFVNLNSSTFYIAFFLGRFTGHPGAYLRLINRWRLEECHPSGCLIDLCMQMGIIMVLKQTWNNFMELGYPLIQNWWTRRKVRQEHGPERKISFPQWEKDYNLQPMNAYGLFDEYLEMILQFGFTTIFVAAFPLAPLLALLNNIIEIRLDAYKFVTQWRRPLASRAKDIGIWYGILEGIGILSVITNAFVIAITSDFIPRLVYAYKYGPCAGQGEAGQKCMVGYVNASLSVFRISDFENRSEPESDGSEFSGTPLKYCRYRDYRDPPHSLVPYGYTLQFWHVLAARLAFIIVFEHLVFCIKHLISYLIPDLPKDLRDRMRREKYLIQEMMYEAELERLQKERKERKKNGKAHHNEWP.

Over 1–323 (METSSSGITN…LYFAWLGWYT (323 aa)) the chain is Cytoplasmic. Positions 38-64 (KDDDSLLHPGNLTSTSDDASRLEAGGE) are disordered. A helical transmembrane segment spans residues 324-344 (GMLFPAAFIGLFVFLYGVITL). Over 345–389 (DHCQVSKEVCQATDIIMCPVCDKYCPFMRLSDSCVYAKVTHLFDN) the chain is Extracellular. A helical membrane pass occupies residues 390-410 (GATVFFAVFMAVWATVFLEFW). Residues 411–470 (KRRRAVIAYDWDLIDWEEEEEEIRPQFEAKYSKKERMNPISGKPEPYQAFADKCSRLIVS) lie on the Cytoplasmic side of the membrane. The chain crosses the membrane as a helical span at residues 471–491 (ASGIFFMICVVIAAVFGIVIY). Residues 492-512 (RVVTVSTFAAFKWALIRNNSQ) lie on the Extracellular side of the membrane. Asn-509 carries N-linked (GlcNAc...) asparagine glycosylation. The chain crosses the membrane as a helical span at residues 513–533 (VATTGTAVCINFCIIMLLNVL). Topologically, residues 534-560 (YEKVALLLTNLEQPRTESEWENSFTLK) are cytoplasmic. The helical transmembrane segment at 561-581 (MFLFQFVNLNSSTFYIAFFLG) threads the bilayer. Residues 582-680 (RFTGHPGAYL…AYGLFDEYLE (99 aa)) lie on the Extracellular side of the membrane. The helical transmembrane segment at 681–701 (MILQFGFTTIFVAAFPLAPLL) threads the bilayer. Over 702–733 (ALLNNIIEIRLDAYKFVTQWRRPLASRAKDIG) the chain is Cytoplasmic. Residues 734–754 (IWYGILEGIGILSVITNAFVI) traverse the membrane as a helical segment. At 755 to 850 (AITSDFIPRL…QFWHVLAARL (96 aa)) the chain is on the extracellular side. Asn-789 and Asn-802 each carry an N-linked (GlcNAc...) asparagine glycan. A helical membrane pass occupies residues 851 to 871 (AFIIVFEHLVFCIKHLISYLI). Residues 872-920 (PDLPKDLRDRMRREKYLIQEMMYEAELERLQKERKERKKNGKAHHNEWP) are Cytoplasmic-facing.

The protein belongs to the anoctamin family.

It is found in the cell membrane. It carries out the reaction a 1,2-diacyl-sn-glycero-3-phospho-L-serine(in) = a 1,2-diacyl-sn-glycero-3-phospho-L-serine(out). The catalysed reaction is a beta-D-galactosyl-(1&lt;-&gt;1')-N-acylsphing-4-enine(out) = a beta-D-galactosyl-(1&lt;-&gt;1')-N-acylsphing-4-enine(in). It catalyses the reaction a 1,2-diacyl-sn-glycero-3-phosphocholine(in) = a 1,2-diacyl-sn-glycero-3-phosphocholine(out). Functionally, has calcium-dependent phospholipid scramblase activity; scrambles phosphatidylserine, phosphatidylcholine and galactosylceramide. Does not exhibit calcium-activated chloride channel (CaCC) activity. This is Anoctamin-4 from Bos taurus (Bovine).